The chain runs to 298 residues: ATP synthase gamma chain (298 aa).

It belongs to the ATPase gamma chain family. In terms of assembly, F-type ATPases have 2 components, CF(1) - the catalytic core - and CF(0) - the membrane proton channel. CF(1) has five subunits: alpha(3), beta(3), gamma(1), delta(1), epsilon(1). CF(0) has three main subunits: a, b and c.

It is found in the cell inner membrane. Its function is as follows. Produces ATP from ADP in the presence of a proton gradient across the membrane. The gamma chain is believed to be important in regulating ATPase activity and the flow of protons through the CF(0) complex. The chain is ATP synthase gamma chain from Francisella tularensis subsp. holarctica (strain FTNF002-00 / FTA).